Reading from the N-terminus, the 511-residue chain is Rab proteins geranylgeranyltransferase component A (511 aa).

Belongs to the Rab GDI family.

It localises to the cytoplasm. It is found in the perinuclear region. Its subcellular location is the cytoskeleton. The protein resides in the spindle pole. Its function is as follows. Binds unprenylated Rab proteins, presents it to the catalytic component B, and remains bound to it after the geranylgeranyl transfer reaction. The component A is thought to be regenerated by transferring its prenylated Rab to a protein acceptor. This is Rab proteins geranylgeranyltransferase component A from Drosophila melanogaster (Fruit fly).